The following is a 456-amino-acid chain: Dolichyl-diphosphooligosaccharide--protein glycosyltransferase 48 kDa subunit (456 aa).

Positions 1-42 (MGYFRCARAGSFGRRRKMEPSTAARAWALFWLLLPLLGAVCA) are cleaved as a signal peptide. Residues 43-427 (SGPRTLVLLD…YERFIPSAYP (385 aa)) are Lumenal-facing. The chain crosses the membrane as a helical span at residues 428-447 (YYASAFSMMLGLFIFSIVFL). At 448 to 456 (HMKEKEKSD) the chain is on the cytoplasmic side.

Belongs to the DDOST 48 kDa subunit family. In terms of assembly, component of the oligosaccharyltransferase (OST) complex. OST exists in two different complex forms which contain common core subunits RPN1, RPN2, OST48, OST4, DAD1 and TMEM258, either STT3A or STT3B as catalytic subunits, and form-specific accessory subunits. STT3A complex assembly occurs through the formation of 3 subcomplexes. Subcomplex 1 contains RPN1 and TMEM258, subcomplex 2 contains the STT3A-specific subunits STT3A, DC2/OSTC, and KCP2 as well as the core subunit OST4, and subcomplex 3 contains RPN2, DAD1, and OST48. The STT3A complex can form stable complexes with the Sec61 complex or with both the Sec61 and TRAP complexes. Interacts with SMIM22.

The protein localises to the endoplasmic reticulum membrane. It functions in the pathway protein modification; protein glycosylation. In terms of biological role, subunit of the oligosaccharyl transferase (OST) complex that catalyzes the initial transfer of a defined glycan (Glc(3)Man(9)GlcNAc(2) in eukaryotes) from the lipid carrier dolichol-pyrophosphate to an asparagine residue within an Asn-X-Ser/Thr consensus motif in nascent polypeptide chains, the first step in protein N-glycosylation. N-glycosylation occurs cotranslationally and the complex associates with the Sec61 complex at the channel-forming translocon complex that mediates protein translocation across the endoplasmic reticulum (ER). All subunits are required for a maximal enzyme activity. Required for the assembly of both SST3A- and SS3B-containing OST complexes. In Homo sapiens (Human), this protein is Dolichyl-diphosphooligosaccharide--protein glycosyltransferase 48 kDa subunit.